The primary structure comprises 269 residues: Propanediol uptake facilitator PduF (269 aa).

The next 2 helical transmembrane spans lie at 10–30 (IAEF…LSAL) and 42–62 (ICII…GISG). The short motif at 66 to 68 (NPA) is the NPA 1 element. A run of 3 helical transmembrane segments spans residues 69–89 (ITIA…PYTV), 143–163 (VWQA…MIMA), and 179–199 (LLIG…TGFA). Residues 201–203 (NPA) carry the NPA 2 motif. The helical transmembrane segment at 228–248 (IPYFIVPIVAPIIGACAGAAI) threads the bilayer.

It belongs to the MIP/aquaporin (TC 1.A.8) family.

It localises to the cell inner membrane. Its function is as follows. Probably facilitates diffusion of 1,2-propanediol (1,2-PD) into the cell. In Citrobacter freundii, this protein is Propanediol uptake facilitator PduF.